A 208-amino-acid polypeptide reads, in one-letter code: N-(5'-phosphoribosyl)anthranilate isomerase (208 aa).

It belongs to the TrpF family.

The catalysed reaction is N-(5-phospho-beta-D-ribosyl)anthranilate = 1-(2-carboxyphenylamino)-1-deoxy-D-ribulose 5-phosphate. It participates in amino-acid biosynthesis; L-tryptophan biosynthesis; L-tryptophan from chorismate: step 3/5. The polypeptide is N-(5'-phosphoribosyl)anthranilate isomerase (Pyrococcus furiosus (strain ATCC 43587 / DSM 3638 / JCM 8422 / Vc1)).